The primary structure comprises 374 residues: Tomoregulin-2 (374 aa).

The N-terminal stretch at 1–40 (MVLWESPRQCSSWTLCEGFCWLLLLPVTLLIIARPVKLAA) is a signal peptide. At 41 to 320 (FPTSLSDCQT…VPGPVRFQYV (280 aa)) the chain is on the extracellular side. Residue Asn55 is glycosylated (N-linked (GlcNAc...) asparagine). 2 consecutive Kazal-like domains span residues 90 to 137 (VCQF…SCAT) and 181 to 229 (VCNI…RCQD). Intrachain disulfides connect Cys91–Cys121, Cys95–Cys114, Cys103–Cys135, Cys182–Cys213, Cys186–Cys206, and Cys195–Cys227. An N-linked (GlcNAc...) asparagine glycan is attached at Asn230. In terms of domain architecture, EGF-like spans 261–301 (HHIPCPEHYNGFCMHGKCEHSINMQEPSCRCDAGYTGQHCE). Cystine bridges form between Cys265-Cys278, Cys273-Cys289, and Cys291-Cys300. Residues 303 to 320 (KDYSVLYVVPGPVRFQYV) are required for shedding. The chain crosses the membrane as a helical span at residues 321 to 341 (LIAAVIGTIQIAVICVVVLCI). At 342 to 374 (TRKCPRSNRIHRQKQNTGHYSSDNTTRASTRLI) the chain is on the cytoplasmic side. Residues 353–374 (RQKQNTGHYSSDNTTRASTRLI) form a disordered region. Polar residues predominate over residues 356-374 (QNTGHYSSDNTTRASTRLI).

It belongs to the tomoregulin family. Post-translationally, O-glycosylated; contains chondroitin sulfate glycosaminoglycans. In terms of processing, a soluble form (TMEFF2-ECD) is produced by proteolytic shedding. This shedding can be induced by phorbol ester or pro-inflammatory cytokines such as TNFalpha, and is mediated by a metalloproteinase ADAM. In terms of tissue distribution, widely expressed in the brain. In the olfactory bulb expressed in mitral cell, granule, and glomerular layers. In the hippocampus expressed in hippocampal cornu ammonis, pyramidal layer, dentate gyrus, and substantia nigra pars compacta.

It localises to the membrane. Its function is as follows. May be a survival factor for hippocampal and mesencephalic neurons. The shedded form may up-regulate cell proliferation. The chain is Tomoregulin-2 (Tmeff2) from Mus musculus (Mouse).